The sequence spans 739 residues: Phosphoribosylformylglycinamidine synthase subunit PurL (739 aa).

His52 is a catalytic residue. 2 residues coordinate ATP: Tyr55 and Lys94. Glu96 contributes to the Mg(2+) binding site. Residues 97–100 (SHNH) and Arg119 contribute to the substrate site. His98 acts as the Proton acceptor in catalysis. Asp120 lines the Mg(2+) pocket. Gln243 is a substrate binding site. Asp271 lines the Mg(2+) pocket. 315-317 (ESQ) contacts substrate. 2 residues coordinate ATP: Asp498 and Gly535. Asn536 provides a ligand contact to Mg(2+). Residue Ser538 participates in substrate binding.

It belongs to the FGAMS family. In terms of assembly, monomer. Part of the FGAM synthase complex composed of 1 PurL, 1 PurQ and 2 PurS subunits.

It localises to the cytoplasm. The catalysed reaction is N(2)-formyl-N(1)-(5-phospho-beta-D-ribosyl)glycinamide + L-glutamine + ATP + H2O = 2-formamido-N(1)-(5-O-phospho-beta-D-ribosyl)acetamidine + L-glutamate + ADP + phosphate + H(+). It functions in the pathway purine metabolism; IMP biosynthesis via de novo pathway; 5-amino-1-(5-phospho-D-ribosyl)imidazole from N(2)-formyl-N(1)-(5-phospho-D-ribosyl)glycinamide: step 1/2. In terms of biological role, part of the phosphoribosylformylglycinamidine synthase complex involved in the purines biosynthetic pathway. Catalyzes the ATP-dependent conversion of formylglycinamide ribonucleotide (FGAR) and glutamine to yield formylglycinamidine ribonucleotide (FGAM) and glutamate. The FGAM synthase complex is composed of three subunits. PurQ produces an ammonia molecule by converting glutamine to glutamate. PurL transfers the ammonia molecule to FGAR to form FGAM in an ATP-dependent manner. PurS interacts with PurQ and PurL and is thought to assist in the transfer of the ammonia molecule from PurQ to PurL. The polypeptide is Phosphoribosylformylglycinamidine synthase subunit PurL (Caulobacter vibrioides (strain ATCC 19089 / CIP 103742 / CB 15) (Caulobacter crescentus)).